Consider the following 286-residue polypeptide: Ribosomal RNA small subunit methyltransferase A (286 aa).

The S-adenosyl-L-methionine site is built by asparagine 28, leucine 30, glycine 55, glutamate 77, aspartate 103, and asparagine 123.

Belongs to the class I-like SAM-binding methyltransferase superfamily. rRNA adenine N(6)-methyltransferase family. RsmA subfamily.

It localises to the cytoplasm. It catalyses the reaction adenosine(1518)/adenosine(1519) in 16S rRNA + 4 S-adenosyl-L-methionine = N(6)-dimethyladenosine(1518)/N(6)-dimethyladenosine(1519) in 16S rRNA + 4 S-adenosyl-L-homocysteine + 4 H(+). In terms of biological role, specifically dimethylates two adjacent adenosines (A1518 and A1519) in the loop of a conserved hairpin near the 3'-end of 16S rRNA in the 30S particle. May play a critical role in biogenesis of 30S subunits. The polypeptide is Ribosomal RNA small subunit methyltransferase A (Bradyrhizobium sp. (strain ORS 278)).